A 142-amino-acid polypeptide reads, in one-letter code: Large ribosomal subunit protein uL13 (142 aa).

This sequence belongs to the universal ribosomal protein uL13 family. Part of the 50S ribosomal subunit.

Functionally, this protein is one of the early assembly proteins of the 50S ribosomal subunit, although it is not seen to bind rRNA by itself. It is important during the early stages of 50S assembly. This chain is Large ribosomal subunit protein uL13, found in Xylella fastidiosa (strain 9a5c).